The chain runs to 232 residues: MPVNFVAARKKRDGVNTHIELQKAIYKSRSFTEINNILDGILPDAHRETPFATYFEANLGCRRPDCMIVFDDLPKQIITCVLVEFKTTSRTAFDKRKKDAVQQYQLHQGEEQVRDAVKILSSITGRGCNLRVWGFLLFYQQSTLRVLHKTIPECAVTLTDRWAFSALLKKSKNESFHAFLQKSCTASTTGPQKELFGIHKPENSEVETVGATKSTRKGAEKSRLSRRSRKSN.

Residues 191-232 (PQKELFGIHKPENSEVETVGATKSTRKGAEKSRLSRRSRKSN) form a disordered region.

The protein belongs to the herpesviridae UL24 family.

It localises to the virion. It is found in the host cytoplasm. The protein localises to the host nucleus. Its subcellular location is the host nucleolus. The protein resides in the host Golgi apparatus. Its function is as follows. May participate in nuclear egress of viral particles. Plays a role in the dispersal of several host nucleolar proteins including NCL/nucleolin and NPM1. Since deletion of host NCL/nucleolin negatively impact on nuclear egress, UL24 supposedly acts on this process through its effect on host nucleoli. This chain is Protein UL24 homolog, found in Elephas maximus (Indian elephant).